Consider the following 1342-residue polypeptide: DNA-directed RNA polymerase subunit beta (1342 aa).

It belongs to the RNA polymerase beta chain family. In terms of assembly, the RNAP catalytic core consists of 2 alpha, 1 beta, 1 beta' and 1 omega subunit. When a sigma factor is associated with the core the holoenzyme is formed, which can initiate transcription.

The enzyme catalyses RNA(n) + a ribonucleoside 5'-triphosphate = RNA(n+1) + diphosphate. In terms of biological role, DNA-dependent RNA polymerase catalyzes the transcription of DNA into RNA using the four ribonucleoside triphosphates as substrates. This is DNA-directed RNA polymerase subunit beta from Yersinia pseudotuberculosis serotype O:1b (strain IP 31758).